We begin with the raw amino-acid sequence, 591 residues long: MLVAGNALNCLFIDSSGFQRYLGFGVTNLNGATVKSYKQEGFVIDERGKLKRFNRKKLSRKRCGSLRGRGWKYGSGFVDGIFPVLSPIAQKILSFIQKETDPDKVADVLGALPSTHASWDDLINVSVQLRLNKKWDSIILVCEWILRKSSFQPDVICFNLLIDAYGQKFQYKEAESLYVQLLESRYVPTEDTYALLIKAYCMAGLIERAEVVLVEMQNHHVSPKTIGVTVYNAYIEGLMKRKGNTEEAIDVFQRMKRDRCKPTTETYNLMINLYGKASKSYMSWKLYCEMRSHQCKPNICTYTALVNAFAREGLCEKAEEIFEQLQEDGLEPDVYVYNALMESYSRAGYPYGAAEIFSLMQHMGCEPDRASYNIMVDAYGRAGLHSDAEAVFEEMKRLGIAPTMKSHMLLLSAYSKARDVTKCEAIVKEMSENGVEPDTFVLNSMLNLYGRLGQFTKMEKILAEMENGPCTADISTYNILINIYGKAGFLERIEELFVELKEKNFRPDVVTWTSRIGAYSRKKLYVKCLEVFEEMIDSGCAPDGGTAKVLLSACSSEEQVEQVTSVLRTMHKGVTVSSLVPKLMAKSLTVN.

PPR repeat units lie at residues 154–188, 189–223, 227–262, 263–297, 298–332, 333–367, 368–402, 403–437, 438–472, 473–507, 508–542, and 543–573; these read DVIC…RYVP, TEDT…HVSP, GVTV…RCKP, TTET…QCKP, NICT…GLEP, DVYV…GCEP, DRAS…GIAP, TMKS…GVEP, DTFV…PCTA, DIST…NFRP, DVVT…GCAP, and DGGT…MHKG.

The protein belongs to the PPR family. P subfamily.

The sequence is that of Pentatricopeptide repeat-containing protein At2g35130 from Arabidopsis thaliana (Mouse-ear cress).